The chain runs to 927 residues: MASFLEKVLRTGDKRVLKRLRTYADAVNSLEDSFKELSDAELRAETDAFRERIADGESLDRLLPEAFAAVREAASRTLGQRHFDVQIMGGAALHLGYIAEMKTGEGKTLVATAPAYLNALAGKGVHVVTVNDYLAEYQANLMGRVYRFLGLETGVILGGQEPAVRREQYAADITYGTNNEFGFDYLRDNMAWTEDELVQRGHNFAIVDEVDSILIDEARTPLIISGPASGEANRWYREFATVVQKLSPETDYEVDEKKRTVGVLEPGIEKVEDWLGIDNLYESRNTPLIGFLNNAIKAKELFRNNKDYIVAGGEVKIVDEHTGRVLAGRRYNEGVHQAIEAKEGVEIKPENQTMATITLQNYFRLYDKLSGMTGTAQTEAAEFMNTYEIGVVAIPPHRGIAREDKRDVVYKNEATKYAAVVRDIEERHEKGQPVLVGTASVEKSEYLSRLLAKRGVRHEVLNAKNHAREAAIVAQAGRKGAVTVATNMAGRGTDIMLGGNAEFNAVDRMAELGLDPERDAEEYEARWPEVLKACEEATRSEHEEVLEAGGLYVLGTERHESRRIDNQLRGRSGRQGDPGESRFYLSLSDDLMRLFNPGAAQRLMAIAPDDVPVTGRLITSGIANAQNQVEGRNAEQRKNVLKYDDVLNRQREVIYKDRKRILMGDDIEDQIRQFTEEVLSSTIAERTGKGHPEDWDLDGLWEALRAVYPVSLTPDEVVEEAGGRPRLTSDFLQEQILSDATVMYLEREEELGSEAMRNLERRVLLSVIGQRWPEHLYEMDYLKEGIGLRAMAQRDPLVEYQREGHAMFQDMMAAIREQTVVTLFNLEVRKQRTGAAGGAVELSAPQRPAFLQYTAPDEDGTPHAEVEAVDPGARERTSEDGTPTDASAGTDPAASSDRPEGETGGNRAKRRGASARSGSKAKRGKRR.

ATP is bound by residues Gln-86, 104 to 108 (GEGKT), and Asp-494. The segment at 853 to 927 (YTAPDEDGTP…GSKAKRGKRR (75 aa)) is disordered. A compositionally biased stretch (basic and acidic residues) spans 860 to 879 (GTPHAEVEAVDPGARERTSE). The segment covering 907–927 (RAKRRGASARSGSKAKRGKRR) has biased composition (basic residues).

The protein belongs to the SecA family. Monomer and homodimer. Part of the essential Sec protein translocation apparatus which comprises SecA, SecYEG and auxiliary proteins SecDF. Other proteins may also be involved.

It is found in the cell membrane. It localises to the cytoplasm. It catalyses the reaction ATP + H2O + cellular proteinSide 1 = ADP + phosphate + cellular proteinSide 2.. Part of the Sec protein translocase complex. Interacts with the SecYEG preprotein conducting channel. Has a central role in coupling the hydrolysis of ATP to the transfer of proteins into and across the cell membrane, serving as an ATP-driven molecular motor driving the stepwise translocation of polypeptide chains across the membrane. This Kocuria rhizophila (strain ATCC 9341 / DSM 348 / NBRC 103217 / DC2201) protein is Protein translocase subunit SecA.